We begin with the raw amino-acid sequence, 883 residues long: Phosphoenolpyruvate carboxylase (883 aa).

Active-site residues include H138 and K546.

This sequence belongs to the PEPCase type 1 family. Requires Mg(2+) as cofactor.

It catalyses the reaction oxaloacetate + phosphate = phosphoenolpyruvate + hydrogencarbonate. Its function is as follows. Forms oxaloacetate, a four-carbon dicarboxylic acid source for the tricarboxylic acid cycle. The protein is Phosphoenolpyruvate carboxylase of Escherichia coli (strain 55989 / EAEC).